We begin with the raw amino-acid sequence, 556 residues long: Endoplasmic reticulum membrane protein 65 (556 aa).

The Cytoplasmic segment spans residues 1-87 (MQHKDTAVAK…IRIPMFLEKF (87 aa)). S22 carries the phosphoserine modification. A helical transmembrane segment spans residues 88–108 (MLFALLTSLDCFLYYFTVLPI). Over 109–151 (RLIKGYVKQFKSYRQHYRLQQRSGHKNKIPFRYRITSREYKER) the chain is Lumenal. A helical membrane pass occupies residues 152–172 (CMIFIIVISSILLSKLDTSKL). Over 173 to 224 (YHRIKRQSTMKLYMLFSVLEMADKMLASLGQSLLTVMLSRKNSERILLHKCL) the chain is Cytoplasmic. Residues 225–245 (LVSMSLTYVTIHGYVLVYQAI) traverse the membrane as a helical segment. Residues 246–330 (SLNIAVNSYS…INFWSPRSTL (85 aa)) are Lumenal-facing. N318 is a glycosylation site (N-linked (GlcNAc...) asparagine). The helical transmembrane segment at 331-351 (SIVINILCGPMVSVVGSEVLV) threads the bilayer. At 352 to 391 (DWAKHAYITKFNRIRPQIYDKFYYIIYKDYSTRTHKLEDR) the chain is on the cytoplasmic side. Residues 392–412 (LGLPLPAFVVLFIVMVRPTLF) form a helical membrane-spanning segment. The Lumenal segment spans residues 413–428 (KSSEPSYLPSLFRILF). Residues 429–449 (MGASVFLLALLAKFTLDLILI) traverse the membrane as a helical segment. Residues 450–556 (KWSKRIEQRF…RYKMVSKRIW (107 aa)) are Cytoplasmic-facing.

It belongs to the TAPT1 family. Interacts with SLP1.

The protein localises to the endoplasmic reticulum membrane. The protein resides in the mitochondrion. Its function is as follows. May be involved in membrane protein folding. This chain is Endoplasmic reticulum membrane protein 65, found in Saccharomyces cerevisiae (strain ATCC 204508 / S288c) (Baker's yeast).